A 1141-amino-acid chain; its full sequence is Isoleucine--tRNA ligase, cytoplasmic (1141 aa).

A 'HIGH' region motif is present at residues 50-60 (PFATGLPHYGH). The short motif at 601–605 (KMSKS) is the 'KMSKS' region element. K604 is an ATP binding site.

The protein belongs to the class-I aminoacyl-tRNA synthetase family.

It localises to the cytoplasm. The catalysed reaction is tRNA(Ile) + L-isoleucine + ATP = L-isoleucyl-tRNA(Ile) + AMP + diphosphate. The sequence is that of Isoleucine--tRNA ligase, cytoplasmic from Caenorhabditis elegans.